An 88-amino-acid chain; its full sequence is Small ribosomal subunit protein uS17 (88 aa).

It belongs to the universal ribosomal protein uS17 family. Part of the 30S ribosomal subunit.

Functionally, one of the primary rRNA binding proteins, it binds specifically to the 5'-end of 16S ribosomal RNA. This chain is Small ribosomal subunit protein uS17, found in Oleidesulfovibrio alaskensis (strain ATCC BAA-1058 / DSM 17464 / G20) (Desulfovibrio alaskensis).